A 248-amino-acid chain; its full sequence is Deoxyribose-phosphate aldolase (248 aa).

Residue Asp117 is the Proton donor/acceptor of the active site. Residue Lys179 is the Schiff-base intermediate with acetaldehyde of the active site. Catalysis depends on Lys208, which acts as the Proton donor/acceptor.

The protein belongs to the DeoC/FbaB aldolase family. DeoC type 1 subfamily.

It localises to the cytoplasm. It catalyses the reaction 2-deoxy-D-ribose 5-phosphate = D-glyceraldehyde 3-phosphate + acetaldehyde. Its pathway is carbohydrate degradation; 2-deoxy-D-ribose 1-phosphate degradation; D-glyceraldehyde 3-phosphate and acetaldehyde from 2-deoxy-alpha-D-ribose 1-phosphate: step 2/2. In terms of biological role, catalyzes a reversible aldol reaction between acetaldehyde and D-glyceraldehyde 3-phosphate to generate 2-deoxy-D-ribose 5-phosphate. The polypeptide is Deoxyribose-phosphate aldolase (Thermotoga maritima (strain ATCC 43589 / DSM 3109 / JCM 10099 / NBRC 100826 / MSB8)).